The sequence spans 130 residues: Small ribosomal subunit protein uS9 (130 aa).

The protein belongs to the universal ribosomal protein uS9 family.

This chain is Small ribosomal subunit protein uS9, found in Sodalis glossinidius (strain morsitans).